The primary structure comprises 243 residues: Proteasome subunit beta 1 (243 aa).

Positions 1–14 (MRAPQHNSDFSRTV) are enriched in polar residues. Residues 1 to 34 (MRAPQHNSDFSRTVDQLADDPNPYEPEIGSMPQN) form a disordered region. Positions 1 to 48 (MRAPQHNSDFSRTVDQLADDPNPYEPEIGSMPQNDLTRADLDNVNKTG) are cleaved as a propeptide — removed in mature form; by autocatalysis. Residue Thr49 is the Nucleophile of the active site.

The protein belongs to the peptidase T1B family. As to quaternary structure, the 20S proteasome core is composed of 14 alpha and 14 beta subunits that assemble into four stacked heptameric rings, resulting in a barrel-shaped structure. The two inner rings, each composed of seven catalytic beta subunits, are sandwiched by two outer rings, each composed of seven alpha subunits. The catalytic chamber with the active sites is on the inside of the barrel. Has a gated structure, the ends of the cylinder being occluded by the N-termini of the alpha-subunits. Is capped at one or both ends by the proteasome regulatory ATPase, PAN.

It is found in the cytoplasm. It carries out the reaction Cleavage of peptide bonds with very broad specificity.. Its activity is regulated as follows. The formation of the proteasomal ATPase PAN-20S proteasome complex, via the docking of the C-termini of PAN into the intersubunit pockets in the alpha-rings, triggers opening of the gate for substrate entry. Interconversion between the open-gate and close-gate conformations leads to a dynamic regulation of the 20S proteasome proteolysis activity. Functionally, component of the proteasome core, a large protease complex with broad specificity involved in protein degradation. The polypeptide is Proteasome subunit beta 1 (Haloterrigena turkmenica (strain ATCC 51198 / DSM 5511 / JCM 9101 / NCIMB 13204 / VKM B-1734 / 4k) (Halococcus turkmenicus)).